The chain runs to 975 residues: Probable ATP-dependent RNA helicase CG8611 (975 aa).

Positions Met1–Ala24 are enriched in polar residues. 3 disordered regions span residues Met1–Asp38, Ala50–Met104, and Thr127–Lys295. A compositionally biased stretch (low complexity) spans Pro64 to Pro94. A phosphoserine mark is found at Ser75 and Ser99. Over residues Gln190–Gly203 the composition is skewed to basic and acidic residues. Ser210, Ser220, and Ser224 each carry phosphoserine. Acidic residues predominate over residues Ile242–Glu261. Residues Gln269–Glu285 show a composition bias toward basic and acidic residues. Residues Ser327–Gln356 carry the Q motif motif. The 190-residue stretch at Ile359 to Ile548 folds into the Helicase ATP-binding domain. ATP is bound at residue Ser372 to Thr379. A DEAD box motif is present at residues Asp485–Asp488. Positions Leu616 to Leu789 constitute a Helicase C-terminal domain. Residue Ser667 is modified to Phosphoserine. Disordered stretches follow at residues Leu915–Ser942 and Asn955–Ala975.

The protein belongs to the DEAD box helicase family. DDX31/DBP7 subfamily.

It catalyses the reaction ATP + H2O = ADP + phosphate + H(+). Its function is as follows. Probable ATP-dependent RNA helicase. The polypeptide is Probable ATP-dependent RNA helicase CG8611 (Drosophila melanogaster (Fruit fly)).